The primary structure comprises 378 residues: Protein RecA (378 aa).

Residue 79-86 (GPESSGKT) coordinates ATP.

This sequence belongs to the RecA family.

It localises to the cytoplasm. In terms of biological role, can catalyze the hydrolysis of ATP in the presence of single-stranded DNA, the ATP-dependent uptake of single-stranded DNA by duplex DNA, and the ATP-dependent hybridization of homologous single-stranded DNAs. It interacts with LexA causing its activation and leading to its autocatalytic cleavage. This chain is Protein RecA, found in Streptococcus pyogenes serotype M28 (strain MGAS6180).